A 133-amino-acid polypeptide reads, in one-letter code: Protein msa (133 aa).

A run of 4 helical transmembrane segments spans residues 3-23, 27-47, 55-75, and 103-123; these read YLILSLVANLLVFGVLSAIGL, ILAAMMMILVIPITISGILFF, YIFFNILFIDFYYYIYNVHLM, and FGFDEILFFTLYLLLILIILY.

The protein localises to the cell membrane. In terms of biological role, accessory element involved in the expression of sarA and several virulence factors. Modulates SarA production and/or function in a strain-dependent manner. Affects the transcription of the accessory gene regulator (agr) and genes encoding virulence factors including alpha toxin (hla) and protein A (spa). The chain is Protein msa (msa) from Staphylococcus aureus (strain bovine RF122 / ET3-1).